A 291-amino-acid polypeptide reads, in one-letter code: Bis(5'-nucleosyl)-tetraphosphatase, symmetrical (291 aa).

It belongs to the Ap4A hydrolase family.

The catalysed reaction is P(1),P(4)-bis(5'-adenosyl) tetraphosphate + H2O = 2 ADP + 2 H(+). Its function is as follows. Hydrolyzes diadenosine 5',5'''-P1,P4-tetraphosphate to yield ADP. This chain is Bis(5'-nucleosyl)-tetraphosphatase, symmetrical, found in Coxiella burnetii (strain CbuK_Q154) (Coxiella burnetii (strain Q154)).